Reading from the N-terminus, the 516-residue chain is D-alanine--D-alanyl carrier protein ligase (516 aa).

156 to 157 (TS) is an ATP binding site. Aspartate 203 serves as a coordination point for D-alanine. 298–303 (NAYGPT) serves as a coordination point for ATP. Valine 307 is a binding site for D-alanine. Residues aspartate 389, 401–404 (YGGR), and lysine 503 contribute to the ATP site. Lysine 503 is a binding site for D-alanine.

It belongs to the ATP-dependent AMP-binding enzyme family. DltA subfamily.

It localises to the cytoplasm. The catalysed reaction is holo-[D-alanyl-carrier protein] + D-alanine + ATP = D-alanyl-[D-alanyl-carrier protein] + AMP + diphosphate. It functions in the pathway cell wall biogenesis; lipoteichoic acid biosynthesis. In terms of biological role, catalyzes the first step in the D-alanylation of lipoteichoic acid (LTA), the activation of D-alanine and its transfer onto the D-alanyl carrier protein (Dcp) DltC. In an ATP-dependent two-step reaction, forms a high energy D-alanyl-AMP intermediate, followed by transfer of the D-alanyl residue as a thiol ester to the phosphopantheinyl prosthetic group of the Dcp. D-alanylation of LTA plays an important role in modulating the properties of the cell wall in Gram-positive bacteria, influencing the net charge of the cell wall. The protein is D-alanine--D-alanyl carrier protein ligase of Streptococcus pneumoniae (strain 70585).